Consider the following 276-residue polypeptide: Large ribosomal subunit protein uL2 (276 aa).

Disordered regions lie at residues 1-58 (MAIR…GGGH) and 218-276 (RPIT…KNRK). The segment covering 16–27 (ASVSDFSDLTRS) has biased composition (polar residues). Residues 255-276 (RRPKKASNKMIVRRRPNGKNRK) are compositionally biased toward basic residues.

This sequence belongs to the universal ribosomal protein uL2 family. In terms of assembly, part of the 50S ribosomal subunit. Forms a bridge to the 30S subunit in the 70S ribosome.

Its function is as follows. One of the primary rRNA binding proteins. Required for association of the 30S and 50S subunits to form the 70S ribosome, for tRNA binding and peptide bond formation. It has been suggested to have peptidyltransferase activity; this is somewhat controversial. Makes several contacts with the 16S rRNA in the 70S ribosome. This Bifidobacterium animalis subsp. lactis (strain AD011) protein is Large ribosomal subunit protein uL2.